The sequence spans 85 residues: UPF0291 protein SEQ_0545 (85 aa).

Residues 62–85 form a disordered region; it reads TPEKLRQVQREKGLHGRSLDDPES.

This sequence belongs to the UPF0291 family.

It localises to the cytoplasm. This chain is UPF0291 protein SEQ_0545, found in Streptococcus equi subsp. equi (strain 4047).